A 276-amino-acid chain; its full sequence is NAD-capped RNA hydrolase NudC (276 aa).

Residue Arg82 participates in substrate binding. Residues Cys112 and Cys115 each coordinate Zn(2+). Glu125 is a binding site for substrate. Zn(2+) contacts are provided by Cys130 and Cys133. Position 138 (Tyr138) interacts with substrate. The 124-residue stretch at Pro139–Tyr262 folds into the Nudix hydrolase domain. A divalent metal cation contacts are provided by Ala172, Glu188, and Glu192. A Nudix box motif is present at residues Gly173–Ala194. A substrate-binding site is contributed by Gln206–Ser213. Residue Glu233 coordinates a divalent metal cation. A substrate-binding site is contributed by Ala255.

This sequence belongs to the Nudix hydrolase family. NudC subfamily. In terms of assembly, homodimer. Requires Mg(2+) as cofactor. Mn(2+) is required as a cofactor. It depends on Zn(2+) as a cofactor.

The catalysed reaction is a 5'-end NAD(+)-phospho-ribonucleoside in mRNA + H2O = a 5'-end phospho-adenosine-phospho-ribonucleoside in mRNA + beta-nicotinamide D-ribonucleotide + 2 H(+). It catalyses the reaction NAD(+) + H2O = beta-nicotinamide D-ribonucleotide + AMP + 2 H(+). It carries out the reaction NADH + H2O = reduced beta-nicotinamide D-ribonucleotide + AMP + 2 H(+). Functionally, mRNA decapping enzyme that specifically removes the nicotinamide adenine dinucleotide (NAD) cap from a subset of mRNAs by hydrolyzing the diphosphate linkage to produce nicotinamide mononucleotide (NMN) and 5' monophosphate mRNA. The NAD-cap is present at the 5'-end of some mRNAs and stabilizes RNA against 5'-processing. Has preference for mRNAs with a 5'-end purine. Catalyzes the hydrolysis of a broad range of dinucleotide pyrophosphates. This is NAD-capped RNA hydrolase NudC from Pseudomonas putida (strain ATCC 47054 / DSM 6125 / CFBP 8728 / NCIMB 11950 / KT2440).